A 326-amino-acid polypeptide reads, in one-letter code: Meso-diaminopimelate D-dehydrogenase (326 aa).

NADP(+) contacts are provided by residues 11–14 (YGNL), 35–37 (TRR), 69–72 (CGGS), 92–94 (SFD), and 121–125 (VGWDP). Substrate-binding positions include Asp94, Asp124, Trp148, 154 to 155 (QG), Thr173, Arg199, His249, and Asn276.

Belongs to the diaminopimelate dehydrogenase family. As to quaternary structure, homodimer.

The catalysed reaction is meso-2,6-diaminopimelate + NADP(+) + H2O = (S)-2-amino-6-oxoheptanedioate + NH4(+) + NADPH + H(+). The protein operates within amino-acid biosynthesis; L-lysine biosynthesis via DAP pathway; DL-2,6-diaminopimelate from (S)-tetrahydrodipicolinate: step 1/1. The enzyme is completely inhibited by p-chloromercuribenzoate and HgCl(2) in vitro. Thioglycollate, L-cysteine and Cu(2+) also strongly inhibit the enzyme. Functionally, catalyzes the reversible NADPH-dependent reductive amination of L-2-amino-6-oxopimelate, the acyclic form of L-tetrahydrodipicolinate, to generate the meso compound, D,L-2,6-diaminopimelate. Probably plays a role in lysine biosynthesis. Is highly specific for meso-2,6-diaminopimelate as the electron donor, since the following amino acids are inert for the oxidative deamination reaction: DL-2-aminopimelate, D-glutamate, L-glutamate, D-aspartate, L-aspartate, D-alanine, L-alanine, D-valine, L-valine, D-lysine, L-lysine, D-phenylalanine, L-phenylalanine, D-leucine, L-leucine, D-threonine, L-threonine, D-serine, L-serine, D-tryptophan, L-tryptophan, D-cysteine, L-cysteine, D-histidine, L-histidine, D-methionine, D-arginine, D-proline, D-asparagine, D-glutamine, D-isoleucine and D-ornithine. Moreover, exclusively uses NADP as the electron acceptor for the oxidative deamination of meso-DAP; NAD is inert. The protein is Meso-diaminopimelate D-dehydrogenase (ddh) of Ureibacillus thermosphaericus.